The sequence spans 186 residues: Iodotyrosine deiodinase (186 aa).

Residues 11–15 (RKTVR), 38–39 (PS), and Ser-39 contribute to the FMN site. Residues Met-41, Glu-68, Tyr-72, and Lys-92 each contribute to the 3-iodo-L-tyrosine site. The L-tyrosine site is built by Met-41, Glu-68, Tyr-72, and Lys-92. Arg-176 serves as a coordination point for FMN.

This sequence belongs to the nitroreductase family. As to quaternary structure, homodimer. The cofactor is FMN.

The catalysed reaction is 2 iodide + L-tyrosine + 2 NADP(+) = 3,5-diiodo-L-tyrosine + 2 NADPH + H(+). The enzyme catalyses iodide + L-tyrosine + NADP(+) = 3-iodo-L-tyrosine + NADPH. It catalyses the reaction 3-iodo-L-tyrosine + iodide + NADP(+) = 3,5-diiodo-L-tyrosine + NADPH + H(+). It carries out the reaction L-tyrosine + chloride + NADP(+) = 3-chloro-L-tyrosine + NADPH. The catalysed reaction is bromide + L-tyrosine + NADP(+) = 3-bromo-L-tyrosine + NADPH. In terms of biological role, catalyzes the dehalogenation of halotyrosines such as 3-bromo-L-tyrosine, 3-chloro-L-tyrosine, 3-iodo-L-tyrosine and 3,5-diiodo-L-tyrosine. Activity towards 2-iodophenol is weak. This chain is Iodotyrosine deiodinase, found in Thermotoga neapolitana (strain ATCC 49049 / DSM 4359 / NBRC 107923 / NS-E).